We begin with the raw amino-acid sequence, 309 residues long: Porphobilinogen deaminase (309 aa).

S-(dipyrrolylmethanemethyl)cysteine is present on C241.

The protein belongs to the HMBS family. As to quaternary structure, monomer. Dipyrromethane is required as a cofactor.

It carries out the reaction 4 porphobilinogen + H2O = hydroxymethylbilane + 4 NH4(+). It functions in the pathway porphyrin-containing compound metabolism; protoporphyrin-IX biosynthesis; coproporphyrinogen-III from 5-aminolevulinate: step 2/4. Tetrapolymerization of the monopyrrole PBG into the hydroxymethylbilane pre-uroporphyrinogen in several discrete steps. The sequence is that of Porphobilinogen deaminase from Bacillus thuringiensis (strain Al Hakam).